The primary structure comprises 304 residues: Aspartate carbamoyltransferase catalytic subunit (304 aa).

2 residues coordinate carbamoyl phosphate: Arg-49 and Thr-50. Lys-77 contacts L-aspartate. The carbamoyl phosphate site is built by Arg-99, His-127, and Gln-130. Residues Arg-160 and Arg-211 each coordinate L-aspartate. 2 residues coordinate carbamoyl phosphate: Ala-250 and Pro-251. Ser-303 bears the Phosphoserine mark.

The protein belongs to the aspartate/ornithine carbamoyltransferase superfamily. ATCase family. Heterododecamer (2C3:3R2) of six catalytic PyrB chains organized as two trimers (C3), and six regulatory PyrI chains organized as three dimers (R2).

The catalysed reaction is carbamoyl phosphate + L-aspartate = N-carbamoyl-L-aspartate + phosphate + H(+). Its pathway is pyrimidine metabolism; UMP biosynthesis via de novo pathway; (S)-dihydroorotate from bicarbonate: step 2/3. Catalyzes the condensation of carbamoyl phosphate and aspartate to form carbamoyl aspartate and inorganic phosphate, the committed step in the de novo pyrimidine nucleotide biosynthesis pathway. The polypeptide is Aspartate carbamoyltransferase catalytic subunit (Bacillus subtilis (strain 168)).